The chain runs to 648 residues: Threonine--tRNA ligase (648 aa).

In terms of domain architecture, TGS spans 1-63 (MSQISLTFPD…AASGRIAINT (63 aa)). A catalytic region spans residues 247–544 (DHRKLGREME…LIENYSGKLP (298 aa)). Zn(2+) contacts are provided by Cys344, His395, and His521.

This sequence belongs to the class-II aminoacyl-tRNA synthetase family. In terms of assembly, homodimer. It depends on Zn(2+) as a cofactor.

Its subcellular location is the cytoplasm. It catalyses the reaction tRNA(Thr) + L-threonine + ATP = L-threonyl-tRNA(Thr) + AMP + diphosphate + H(+). Its function is as follows. Catalyzes the attachment of threonine to tRNA(Thr) in a two-step reaction: L-threonine is first activated by ATP to form Thr-AMP and then transferred to the acceptor end of tRNA(Thr). Also edits incorrectly charged L-seryl-tRNA(Thr). The chain is Threonine--tRNA ligase from Paracoccus denitrificans (strain Pd 1222).